A 406-amino-acid chain; its full sequence is MAAAATTSSHLLLLSRQQAAASLQCGLSFRRQPGRLAGGSSAPSVRCMAAVDTASAPAATEASKKSSYEITTLTTWLLKQEQAGTIDGEMTIVLASISTACKQIASLVQRAPISNLTGVQGAVNVQGEDQKKLDVVSNEVFSNCLKSSGRTGVIASEEEDVPVAVEESYSGNYIVVFDPLDGSSNIDAAVSTGSIFGIYSPNDECLADIADDQNLDQVEQRCIVSVCQPGSNLLAAGYCMYSSSVIFVLTIGTGVYVFTLDPMYGEFVLTQEKVQIPKAGKIYAFNEGNYALWDDKLKSYMDSLKEPGPSGKPYSARYIGSLVGDFHRTLLYGGIYGYPRDQKSKNGKLRLLYECAPMSFIVEQAGGKGSDGHQRILDIMPTEIHQRVPLYIGSVEEVEKVEKFLA.

Residues 1-47 constitute a chloroplast transit peptide; it reads MAAAATTSSHLLLLSRQQAAASLQCGLSFRRQPGRLAGGSSAPSVRC. Mg(2+)-binding residues include Glu-128, Glu-157, Asp-178, Leu-180, and Asp-181. Residue 181 to 184 participates in substrate binding; that stretch reads DGSS. An intrachain disulfide couples Cys-222 to Cys-227. The substrate site is built by Asn-286, Tyr-318, Tyr-336, Tyr-338, and Lys-348. Glu-354 contributes to the Mg(2+) binding site.

It belongs to the FBPase class 1 family. As to quaternary structure, homotetramer. Requires Mg(2+) as cofactor.

It is found in the plastid. The protein localises to the chloroplast stroma. It carries out the reaction beta-D-fructose 1,6-bisphosphate + H2O = beta-D-fructose 6-phosphate + phosphate. It participates in carbohydrate biosynthesis; Calvin cycle. With respect to regulation, inhibited by sodium chloride. Its function is as follows. Catalyzes the irreversible reaction from fructose-1,6-bisphosphate to fructose-6-phosphate and inorganic phosphate, to regenerate the primary CO(2) acceptor molecule, ribulose-1,5-bisphosphate. Involved in the regulation of photosynthetic performance and sucrose synthesis. The sequence is that of Fructose-1,6-bisphosphatase, chloroplastic from Oryza sativa subsp. indica (Rice).